A 196-amino-acid polypeptide reads, in one-letter code: MLERIKGCFTESIQTQIAAAEALPDAISRAALTLVQSLLNGNKILCCGNGASGANAQHFAATLINRFETERPSLPAIALNADSVVLTAIGNDRLHDEIYAKQVRALGHAGDVLLAISTRGNSRDIVKAVEAAVTRDMTIVALTGYDGGELAGLLGQQDVEIRIPSHHSTRIQEMHMLTVNCLCDLIDNTLFPHQAD.

An SIS domain is found at 34–196 (LVQSLLNGNK…DNTLFPHQAD (163 aa)).

This sequence belongs to the SIS family. DiaA subfamily. As to quaternary structure, homotetramer; dimer of dimers.

Its function is as follows. Required for the timely initiation of chromosomal replication via direct interactions with the DnaA initiator protein. The sequence is that of DnaA initiator-associating protein DiaA from Edwardsiella ictaluri (strain 93-146).